Consider the following 279-residue polypeptide: Large ribosomal subunit protein uL2 (279 aa).

Disordered regions lie at residues leucine 34–glycine 55 and arginine 221–lysine 279. Positions serine 40 to glycine 55 are enriched in basic residues. Gly residues predominate over residues methionine 232–glycine 242. The segment covering leucine 259–lysine 279 has biased composition (basic residues).

The protein belongs to the universal ribosomal protein uL2 family. In terms of assembly, part of the 50S ribosomal subunit. Forms a bridge to the 30S subunit in the 70S ribosome.

Functionally, one of the primary rRNA binding proteins. Required for association of the 30S and 50S subunits to form the 70S ribosome, for tRNA binding and peptide bond formation. It has been suggested to have peptidyltransferase activity; this is somewhat controversial. Makes several contacts with the 16S rRNA in the 70S ribosome. In Chlorobium phaeobacteroides (strain BS1), this protein is Large ribosomal subunit protein uL2.